A 726-amino-acid polypeptide reads, in one-letter code: Catalase-peroxidase (726 aa).

The span at 1 to 13 (MSMSEETNNSLSS) shows a compositional bias: polar residues. The disordered stretch occupies residues 1 to 34 (MSMSEETNNSLSSGKCPFHHGGSDQSAGEGTGSR). Positions 105 to 226 (WHGAGTYRSV…LAATEMGLIY (122 aa)) form a cross-link, tryptophyl-tyrosyl-methioninium (Trp-Tyr) (with M-252). Catalysis depends on H106, which acts as the Proton acceptor. The segment at residues 226–252 (YVNPEGPNASGEPLSAAAAIRATFGNM) is a cross-link (tryptophyl-tyrosyl-methioninium (Tyr-Met) (with W-105)). Position 267 (H267) interacts with heme b.

Belongs to the peroxidase family. Peroxidase/catalase subfamily. Homodimer or homotetramer. Heme b serves as cofactor. In terms of processing, formation of the three residue Trp-Tyr-Met cross-link is important for the catalase, but not the peroxidase activity of the enzyme.

It carries out the reaction H2O2 + AH2 = A + 2 H2O. The enzyme catalyses 2 H2O2 = O2 + 2 H2O. In terms of biological role, bifunctional enzyme with both catalase and broad-spectrum peroxidase activity. This chain is Catalase-peroxidase, found in Enterobacter sp. (strain 638).